A 124-amino-acid polypeptide reads, in one-letter code: Fluoride-specific ion channel FluC 1 (124 aa).

The next 4 membrane-spanning stretches (helical) occupy residues isoleucine 7–isoleucine 27, leucine 32–leucine 52, isoleucine 58–leucine 78, and alanine 93–isoleucine 113. 2 residues coordinate Na(+): glycine 68 and threonine 71.

The protein belongs to the fluoride channel Fluc/FEX (TC 1.A.43) family.

It localises to the cell inner membrane. It catalyses the reaction fluoride(in) = fluoride(out). With respect to regulation, na(+) is not transported, but it plays an essential structural role and its presence is essential for fluoride channel function. Its function is as follows. Fluoride-specific ion channel. Important for reducing fluoride concentration in the cell, thus reducing its toxicity. The sequence is that of Fluoride-specific ion channel FluC 1 from Prochlorococcus marinus (strain SARG / CCMP1375 / SS120).